A 107-amino-acid polypeptide reads, in one-letter code: BolA-like protein 3 (107 aa).

This sequence belongs to the BolA/IbaG family. In terms of assembly, interacts with NFU1. Widely expressed.

It localises to the mitochondrion. In terms of biological role, acts as a mitochondrial iron-sulfur (Fe-S) cluster assembly factor that facilitates (Fe-S) cluster insertion into a subset of mitochondrial proteins. Probably acts together with NFU1. The protein is BolA-like protein 3 of Homo sapiens (Human).